The chain runs to 929 residues: Isoleucine--tRNA ligase (929 aa).

The 'HIGH' region motif lies at 58–68 (PYANGDIHIGH). Residue Glu-568 participates in L-isoleucyl-5'-AMP binding. Positions 609–613 (KMSKS) match the 'KMSKS' region motif. Lys-612 is an ATP binding site. Zn(2+) is bound by residues Cys-892, Cys-895, Cys-912, and Cys-915.

This sequence belongs to the class-I aminoacyl-tRNA synthetase family. IleS type 1 subfamily. Monomer. Zn(2+) is required as a cofactor.

It is found in the cytoplasm. It carries out the reaction tRNA(Ile) + L-isoleucine + ATP = L-isoleucyl-tRNA(Ile) + AMP + diphosphate. Its function is as follows. Catalyzes the attachment of isoleucine to tRNA(Ile). As IleRS can inadvertently accommodate and process structurally similar amino acids such as valine, to avoid such errors it has two additional distinct tRNA(Ile)-dependent editing activities. One activity is designated as 'pretransfer' editing and involves the hydrolysis of activated Val-AMP. The other activity is designated 'posttransfer' editing and involves deacylation of mischarged Val-tRNA(Ile). This chain is Isoleucine--tRNA ligase, found in Thiobacillus denitrificans (strain ATCC 25259 / T1).